We begin with the raw amino-acid sequence, 249 residues long: Methylthioribulose-1-phosphate dehydratase (249 aa).

Zn(2+) is bound by residues H103 and H105.

This sequence belongs to the aldolase class II family. MtnB subfamily. Zn(2+) is required as a cofactor.

It catalyses the reaction 5-(methylsulfanyl)-D-ribulose 1-phosphate = 5-methylsulfanyl-2,3-dioxopentyl phosphate + H2O. It participates in amino-acid biosynthesis; L-methionine biosynthesis via salvage pathway; L-methionine from S-methyl-5-thio-alpha-D-ribose 1-phosphate: step 2/6. Its function is as follows. Catalyzes the dehydration of methylthioribulose-1-phosphate (MTRu-1-P) into 2,3-diketo-5-methylthiopentyl-1-phosphate (DK-MTP-1-P). This is Methylthioribulose-1-phosphate dehydratase from Leptospira interrogans serogroup Icterohaemorrhagiae serovar copenhageni (strain Fiocruz L1-130).